The following is a 630-amino-acid chain: tRNA uridine 5-carboxymethylaminomethyl modification enzyme MnmG (630 aa).

13 to 18 is a binding site for FAD; it reads GGGHAG. NAD(+) is bound at residue 273–287; it reads GPRYCPSIEDKIHRF.

The protein belongs to the MnmG family. As to quaternary structure, homodimer. Heterotetramer of two MnmE and two MnmG subunits. FAD serves as cofactor.

It is found in the cytoplasm. Its function is as follows. NAD-binding protein involved in the addition of a carboxymethylaminomethyl (cmnm) group at the wobble position (U34) of certain tRNAs, forming tRNA-cmnm(5)s(2)U34. This chain is tRNA uridine 5-carboxymethylaminomethyl modification enzyme MnmG, found in Pseudomonas aeruginosa (strain ATCC 15692 / DSM 22644 / CIP 104116 / JCM 14847 / LMG 12228 / 1C / PRS 101 / PAO1).